A 146-amino-acid chain; its full sequence is Aspartate carbamoyltransferase regulatory chain (146 aa).

The Zn(2+) site is built by C102, C107, C131, and C134.

The protein belongs to the PyrI family. In terms of assembly, contains catalytic and regulatory chains. Requires Zn(2+) as cofactor.

Functionally, involved in allosteric regulation of aspartate carbamoyltransferase. In Clostridium botulinum (strain Okra / Type B1), this protein is Aspartate carbamoyltransferase regulatory chain.